Consider the following 769-residue polypeptide: Sensor histidine kinase ComP (769 aa).

Over 1–9 (MKNLIKKFT) the chain is Cytoplasmic. A helical membrane pass occupies residues 10–33 (IAVIVLSILYISYTTYISMNGIII). The Extracellular segment spans residues 34 to 113 (GTKIHKNDKS…DFDLVTLNRP (80 aa)). Residues 114–134 (YSFFLFVLPLFFYFLSIICIF) traverse the membrane as a helical segment. The Cytoplasmic portion of the chain corresponds to 135 to 144 (YILKVNKKRR). Residues 145 to 167 (SFAAYILILLLLDISIAYISAGG) form a helical membrane-spanning segment. The Extracellular portion of the chain corresponds to 168–235 (PFRGHIINRY…QDYLQVDIDF (68 aa)). A helical membrane pass occupies residues 236-257 (LATLNLVSFATLTLFSFSAIYL). The Cytoplasmic portion of the chain corresponds to 258–272 (HLNKYKYAEHSFILK). The chain crosses the membrane as a helical span at residues 273–295 (LLILTNTLSFAPFLIFFVLPIIF). Residues 296–299 (TGNY) lie on the Extracellular side of the membrane. A helical transmembrane segment spans residues 300–323 (IFPALASASLLVLIPFGLVYQFVA). Residues 324-337 (NKMFDIEFILGRMR) are Cytoplasmic-facing. A helical membrane pass occupies residues 338 to 357 (YYALLAMIPTLLIVGALVLF). Topologically, residues 358 to 361 (DVMD) are extracellular. The helical transmembrane segment at 362 to 383 (IQMNPVRQTVFFFVVMFAVFYF) threads the bilayer. Topologically, residues 384 to 769 (KEVMDFKFRL…GFKADIEIEL (386 aa)) are cytoplasmic. The Histidine kinase domain occupies 571–769 (LARDLHDSVL…GFKADIEIEL (199 aa)). Position 576 is a phosphohistidine; by autocatalysis (H576).

In terms of processing, autophosphorylates on a histidine and transfers the phosphate group onto an aspartate in ComA, thus activating it.

The protein localises to the cell membrane. The enzyme catalyses ATP + protein L-histidine = ADP + protein N-phospho-L-histidine.. Sensor in the two-component regulatory system ComP/ComA involved in a major quorum response pathway that regulates the development of genetic competence. Plays a role in sporulation, at least partly interchangeable with that of SpoIIJ. Probably activates ComA by phosphorylation. The protein is Sensor histidine kinase ComP (comP) of Bacillus subtilis (strain 168).